A 113-amino-acid chain; its full sequence is Mini zinc finger protein 2 (113 aa).

Residues Tyr-24 to Val-83 form a ZF-HD dimerization-type; degenerate zinc finger. The disordered stretch occupies residues Asp-93–Glu-113. Residues Ser-100–Glu-113 show a composition bias toward low complexity.

In terms of assembly, homo- and heterodimers.

Its subcellular location is the cytoplasm. In terms of biological role, inhibits zinc finger homeodomain (ZHD) transcription factors, by interacting with them to prevent both their nuclear localization and their DNA-binding properties. This is Mini zinc finger protein 2 (MIF3) from Oryza sativa subsp. japonica (Rice).